Reading from the N-terminus, the 2298-residue chain is Protein Ycf2 (2298 aa).

1652–1659 serves as a coordination point for ATP; sequence GSIGTGRS.

It belongs to the Ycf2 family.

Its subcellular location is the plastid. The protein resides in the chloroplast stroma. In terms of biological role, probable ATPase of unknown function. Its presence in a non-photosynthetic plant (Epifagus virginiana) and experiments in tobacco indicate that it has an essential function which is probably not related to photosynthesis. The polypeptide is Protein Ycf2 (Aethionema cordifolium (Lebanon stonecress)).